Here is a 544-residue protein sequence, read N- to C-terminus: MADTNPNAPPRSDSLLNPADALKYLEEYPRGDGLSLQELMDSRKNGGLTYNDFLVLPGHISFPASDVSLQSRATKNIVLNTPFLSSPMDTVTEDRMAIALALHGGLGIIHHNCSAEEQAAMVRRVKKYENGFITDPLCLGPDATVGDVLEIKAKFGFCGVPITETGAPNSKLLGIVTGRDVQFQDAETPIKSVMTTEVVTGSSPITLEKANSLLRETKKGKLPIVDSNGHLVSLVARSDLLKNQNYPYASKVPESKQLYCGAAIGTRPGDKDRLKLLAEAGLDVVVLDSSQGDSVYQIEFIKWIKQTYPKIEIIAGNVVTREQAAQLIAAGADGLRIGMGSGSICITQEVMAVGRPQGTAVYAVAEFASRFGIPCIADGGIGNIGHIAKALALGASAVMMGGLLAGTTESPGEYFYHEGKRVKVYRGMGSIEAMEHTQRGSASGKRSILNLDNAATARYFSEADAVKVAQGVSGDVADKGSINKFVPYLFTGLQHSFQDAGVKSVSELHSCARSGSLRFELRTASAQLEGGVHGLNSYTKRLFA.

CBS domains lie at 132–192 and 194–250; these read FITD…PIKS and MTTE…PYAS. Residues 288–290 and 338–340 contribute to the NAD(+) site; these read DSS and GMG. The K(+) site is built by Gly340 and Gly342. Ser343 contributes to the IMP binding site. Cys345 is a binding site for K(+). Cys345 acts as the Thioimidate intermediate in catalysis. IMP is bound by residues 378–380, 401–402, and 425–429; these read DGG, GG, and YRGMG. Arg458 (proton acceptor) is an active-site residue. An IMP-binding site is contributed by Gln470. K(+) is bound by residues Glu529, Gly530, and Gly531.

This sequence belongs to the IMPDH/GMPR family. As to quaternary structure, homotetramer. K(+) is required as a cofactor.

It localises to the cytoplasm. It catalyses the reaction IMP + NAD(+) + H2O = XMP + NADH + H(+). It functions in the pathway purine metabolism; XMP biosynthesis via de novo pathway; XMP from IMP: step 1/1. Mycophenolic acid (MPA) is a non-competitive inhibitor that prevents formation of the closed enzyme conformation by binding to the same site as the amobile flap. In contrast, mizoribine monophosphate (MZP) is a competitive inhibitor that induces the closed conformation. MPA is a potent inhibitor of mammalian IMPDHs but a poor inhibitor of the bacterial enzymes. MZP is a more potent inhibitor of bacterial IMPDH. Its function is as follows. Catalyzes the conversion of inosine 5'-phosphate (IMP) to xanthosine 5'-phosphate (XMP), the first committed and rate-limiting step in the de novo synthesis of guanine nucleotides, and therefore plays an important role in the regulation of cell growth. The polypeptide is Inosine-5'-monophosphate dehydrogenase (Cryptococcus neoformans var. neoformans serotype D (strain JEC21 / ATCC MYA-565) (Filobasidiella neoformans)).